The primary structure comprises 50 residues: Peroxiredoxin-6 (50 aa).

A Thioredoxin domain is found at 1 to 50 (DFTPVCTTELGRLAPEFAKRVVFIFGPDKKLKLSILYPATTGRNFDEILR). At Thr-3 the chain carries Phosphothreonine. Cys-6 functions as the Cysteine sulfenic acid (-SOH) intermediate; for peroxidase activity in the catalytic mechanism. Residue Lys-19 is modified to N6-acetyllysine. Asp-28 functions as the For phospholipase activity in the catalytic mechanism.

This sequence belongs to the peroxiredoxin family. Prx6 subfamily. In terms of assembly, homodimer. Interacts with GSTP1; mediates PRDX6 glutathionylation and regeneration. Interacts with APEX1. Interacts with STH. May interact with FAM168B. May interact with HTR2A. In terms of processing, irreversibly inactivated by overoxidation of Cys-6 to sulfinic acid (Cys-SO(2)H) and sulfonic acid (Cys-SO(3)H) forms upon oxidative stress. Phosphorylation at Thr-177 by MAP kinases increases the phospholipase activity of the enzyme. The phosphorylated form exhibits a greater lysophosphatidylcholine acyltransferase activity compared to the non-phosphorylated form.

It localises to the cytoplasm. The protein localises to the lysosome. The catalysed reaction is a hydroperoxide + 2 glutathione = an alcohol + glutathione disulfide + H2O. The enzyme catalyses a 1,2-diacyl-sn-glycero-3-phosphocholine + H2O = a 1-acyl-sn-glycero-3-phosphocholine + a fatty acid + H(+). It carries out the reaction a 1-acyl-sn-glycero-3-phosphocholine + an acyl-CoA = a 1,2-diacyl-sn-glycero-3-phosphocholine + CoA. It catalyses the reaction 1-hexadecanoyl-sn-glycero-3-phosphocholine + hexadecanoyl-CoA = 1,2-dihexadecanoyl-sn-glycero-3-phosphocholine + CoA. The catalysed reaction is 1,2-dihexadecanoyl-sn-glycero-3-phosphocholine + H2O = 1-hexadecanoyl-sn-glycero-3-phosphocholine + hexadecanoate + H(+). Functionally, thiol-specific peroxidase that catalyzes the reduction of hydrogen peroxide and organic hydroperoxides to water and alcohols, respectively. Can reduce H(2)O(2) and short chain organic, fatty acid, and phospholipid hydroperoxides. Also has phospholipase activity, and can therefore either reduce the oxidized sn-2 fatty acyl group of phospholipids (peroxidase activity) or hydrolyze the sn-2 ester bond of phospholipids (phospholipase activity). These activities are dependent on binding to phospholipids at acidic pH and to oxidized phospholipds at cytosolic pH. Plays a role in cell protection against oxidative stress by detoxifying peroxides and in phospholipid homeostasis. Exhibits acyl-CoA-dependent lysophospholipid acyltransferase which mediates the conversion of lysophosphatidylcholine (1-acyl-sn-glycero-3-phosphocholine or LPC) into phosphatidylcholine (1,2-diacyl-sn-glycero-3-phosphocholine or PC). Shows a clear preference for LPC as the lysophospholipid and for palmitoyl CoA as the fatty acyl substrate. The chain is Peroxiredoxin-6 from Mesocricetus auratus (Golden hamster).